The following is a 291-amino-acid chain: uncharacterized protein (291 aa).

This is an uncharacterized protein from Lymantria dispar multicapsid nuclear polyhedrosis virus (LdMNPV).